Reading from the N-terminus, the 123-residue chain is Heat-labile enterotoxin IIA, B chain (123 aa).

The N-terminal stretch at 1-19 is a signal peptide; the sequence is MSSKKIIGAFVLMTGILSG. The cysteines at positions 33 and 104 are disulfide-linked.

In terms of assembly, heterohexamer of one A chain and of five B chains.

The biological activity of the toxin is produced by the A chain, which activates intracellular adenyl cyclase. The chain is Heat-labile enterotoxin IIA, B chain from Escherichia coli.